The primary structure comprises 321 residues: Peptide transport system permease protein SapB (321 aa).

At 1–8 (MIIFTLRR) the chain is on the cytoplasmic side. The helical transmembrane segment at 9–29 (LLLLLVTLFFLTFIGFSLSYF) threads the bilayer. Over 30-80 (TPHAPLQGASLWNAWVFWFNGLLHWDFGVSSINGQLISEQLKEVFPATMEL) the chain is Periplasmic. The region spanning 74–302 (FPATMELCIL…SLVIVVNVIS (229 aa)) is the ABC transmembrane type-1 domain. The chain crosses the membrane as a helical span at residues 81 to 101 (CILAFGFALMVGIPVGMLAGV). Residues 102-113 (TRSKWPDRFISA) are Cytoplasmic-facing. The chain crosses the membrane as a helical span at residues 114–134 (LALLGFSIPVFWLALLLTLFF). Residues 135–174 (SLTLGWLPVSGRFDLLYEVKPVTGFAIIDAWISDSPWRDE) lie on the Periplasmic side of the membrane. Residues 175–195 (MVMSAIRHMVLPVLTLSVAPT) traverse the membrane as a helical segment. Over 196–248 (TEVIRLMRISTIEVYDQNYVKAAATRGLSRFTILRRHVLHNALPPVIPRLGLQ) the chain is Cytoplasmic. The chain crosses the membrane as a helical span at residues 249–269 (FSTMLTLAMITEMVFSWPGLG). Residues 270–280 (RWLIHAIRQQD) are Periplasmic-facing. The helical transmembrane segment at 281 to 301 (YAAISAGVMVIGSLVIVVNVI) threads the bilayer. Residues 302–321 (SDILGAMANPLKHKEWYALR) are Cytoplasmic-facing.

Belongs to the binding-protein-dependent transport system permease family. OppBC subfamily.

It localises to the cell inner membrane. Its function is as follows. Involved in a peptide intake transport system that plays a role in the resistance to antimicrobial peptides. The chain is Peptide transport system permease protein SapB from Salmonella typhimurium (strain LT2 / SGSC1412 / ATCC 700720).